The chain runs to 127 residues: Probable toxin y4kH (127 aa).

The protein belongs to the MbcT/ParT/Res family.

Its function is as follows. Probable toxic component of a type II toxin-antitoxin (TA) system. It is not known which gene encodes its antitoxin. The chain is Probable toxin y4kH from Sinorhizobium fredii (strain NBRC 101917 / NGR234).